Consider the following 407-residue polypeptide: MSAVPLRNNKAIAADVRSITVLGATGSIGDSTMDLLRGAPERYRVEALTGNSNIEGLAKLAREFNSRFVAVADPARLGELREALAGTGIACGAGESAIIEAAARPADWVMAAVSGAAGLKPALAAVDRGATVALANKECLVCAGDFFMQRAAQAGACILPADSEHNALFQALSSGNREELVRVIITASGGPFRTWAPQDIEQATLEQALKHPNWSMGQKITIDSASMMNKGLEVIEASYLFALSPDEIDVLVHPQSIVHGMVEFSDRSVVAQLGAPDMRIPIAHCLGWPERIKGPSARLDLAKIGTLTFEAPDFERFPGLRLAYDSLRAGRGATTVFNAANEVAVAAFIGGHIRFGAIARLVEATLNDWTRSGNQAPLSSADDAIAIDHDARKRAAGLLPQIAAKAS.

Residues threonine 25, glycine 26, serine 27, isoleucine 28, asparagine 53, and asparagine 136 each coordinate NADPH. A 1-deoxy-D-xylulose 5-phosphate-binding site is contributed by lysine 137. Glutamate 138 provides a ligand contact to NADPH. Mn(2+) is bound at residue aspartate 162. Residues serine 163, glutamate 164, serine 188, and histidine 211 each coordinate 1-deoxy-D-xylulose 5-phosphate. Residue glutamate 164 coordinates Mn(2+). NADPH is bound at residue glycine 217. Positions 224, 229, 230, and 233 each coordinate 1-deoxy-D-xylulose 5-phosphate. Glutamate 233 is a Mn(2+) binding site.

It belongs to the DXR family. Requires Mg(2+) as cofactor. Mn(2+) is required as a cofactor.

It catalyses the reaction 2-C-methyl-D-erythritol 4-phosphate + NADP(+) = 1-deoxy-D-xylulose 5-phosphate + NADPH + H(+). It functions in the pathway isoprenoid biosynthesis; isopentenyl diphosphate biosynthesis via DXP pathway; isopentenyl diphosphate from 1-deoxy-D-xylulose 5-phosphate: step 1/6. Catalyzes the NADPH-dependent rearrangement and reduction of 1-deoxy-D-xylulose-5-phosphate (DXP) to 2-C-methyl-D-erythritol 4-phosphate (MEP). In Bradyrhizobium sp. (strain ORS 278), this protein is 1-deoxy-D-xylulose 5-phosphate reductoisomerase.